The chain runs to 74 residues: Putative defensin-like protein 27 (74 aa).

Positions 1 to 19 (MVHPRFVFFAFLALSVLLA) are cleaved as a signal peptide. Intrachain disulfides connect cysteine 36/cysteine 74, cysteine 46/cysteine 65, cysteine 51/cysteine 70, and cysteine 55/cysteine 72.

This sequence belongs to the DEFL family.

The protein localises to the secreted. This is Putative defensin-like protein 27 from Arabidopsis thaliana (Mouse-ear cress).